A 415-amino-acid chain; its full sequence is 8-amino-7-oxononanoate synthase (415 aa).

Substrate is bound at residue arginine 21. A pyridoxal 5'-phosphate-binding site is contributed by 117–118 (GY). Residue histidine 149 coordinates substrate. Pyridoxal 5'-phosphate is bound by residues serine 195, histidine 223, and threonine 251. Lysine 254 carries the N6-(pyridoxal phosphate)lysine modification. Threonine 374 is a binding site for substrate.

The protein belongs to the class-II pyridoxal-phosphate-dependent aminotransferase family. BioF subfamily. As to quaternary structure, homodimer. Pyridoxal 5'-phosphate is required as a cofactor.

It catalyses the reaction 6-carboxyhexanoyl-[ACP] + L-alanine + H(+) = (8S)-8-amino-7-oxononanoate + holo-[ACP] + CO2. It participates in cofactor biosynthesis; biotin biosynthesis. Catalyzes the decarboxylative condensation of pimeloyl-[acyl-carrier protein] and L-alanine to produce 8-amino-7-oxononanoate (AON), [acyl-carrier protein], and carbon dioxide. The sequence is that of 8-amino-7-oxononanoate synthase from Ralstonia pickettii (strain 12J).